The primary structure comprises 262 residues: Nodulation protein J (262 aa).

The ABC transmembrane type-2 domain occupies Ala33 to Arg259. Transmembrane regions (helical) follow at residues Gly37–Val57, Ser64–Phe84, Gly102–Ala122, Ser125–Thr145, Cys149–Ile169, Tyr177–Phe197, and Leu236–Phe256.

The protein belongs to the ABC-2 integral membrane protein family. Lipooligosaccharide exporter (TC 3.A.1.102) subfamily. The complex is composed of two ATP-binding proteins (NodI) and two transmembrane proteins (NodJ).

It localises to the cell inner membrane. In terms of biological role, part of the ABC transporter complex NodIJ involved in the export of the nodulation factors (Nod factors), the bacterial signal molecules that induce symbiosis and subsequent nodulation induction. Nod factors are LCO (lipo-chitin oligosaccharide), a modified beta-1,4-linked N-acetylglucosamine oligosaccharide. This subunit encodes the transporter. This is Nodulation protein J (nodJ) from Bradyrhizobium diazoefficiens (strain JCM 10833 / BCRC 13528 / IAM 13628 / NBRC 14792 / USDA 110).